The following is a 369-amino-acid chain: Superinfection exclusion protein (369 aa).

A signal peptide spans 1-15 (MIALLILSLTCSAST).

It belongs to the serpin family. Orthopoxvirus OPG040 subfamily. As to quaternary structure, interacts with A56 protein.

The protein localises to the virion membrane. Its subcellular location is the host cell membrane. Its function is as follows. Prevents cell to cell fusion via its interaction with A56 protein. The A56-K2 complex associates with components of the entry fusion complex (EFC) presumably to avoid superinfection and syncytium formation. The chain is Superinfection exclusion protein (OPG040) from Vaccinia virus (strain Ankara) (VACV).